A 650-amino-acid polypeptide reads, in one-letter code: Threonine--tRNA ligase (650 aa).

The TGS domain maps to 3-65 (DLVKVTLPDG…DRDARLEIVT (63 aa)). The catalytic stretch occupies residues 248-548 (DHRRLGPQLG…LTEHYAGAFP (301 aa)). Residues cysteine 349, histidine 400, and histidine 525 each coordinate Zn(2+).

It belongs to the class-II aminoacyl-tRNA synthetase family. Homodimer. Zn(2+) serves as cofactor.

The protein resides in the cytoplasm. The catalysed reaction is tRNA(Thr) + L-threonine + ATP = L-threonyl-tRNA(Thr) + AMP + diphosphate + H(+). Its function is as follows. Catalyzes the attachment of threonine to tRNA(Thr) in a two-step reaction: L-threonine is first activated by ATP to form Thr-AMP and then transferred to the acceptor end of tRNA(Thr). Also edits incorrectly charged L-seryl-tRNA(Thr). The polypeptide is Threonine--tRNA ligase (Anaeromyxobacter dehalogenans (strain 2CP-C)).